Reading from the N-terminus, the 158-residue chain is uncharacterized protein (158 aa).

Transmembrane regions (helical) follow at residues 10-30 (LSSL…QFIV) and 137-157 (IEVF…AYFF).

Its subcellular location is the cell membrane. This is an uncharacterized protein from Bacillus subtilis (strain 168).